Consider the following 173-residue polypeptide: NADH-ubiquinone oxidoreductase chain 6 (173 aa).

5 helical membrane passes run 1 to 21 (MTYF…AVAS), 25 to 45 (PYFA…VLVG), 53 to 73 (LVLF…SAAL), 87 to 107 (VLGY…FFWG), and 141 to 161 (GGML…VLEL).

Belongs to the complex I subunit 6 family.

The protein localises to the mitochondrion membrane. The catalysed reaction is a ubiquinone + NADH + 5 H(+)(in) = a ubiquinol + NAD(+) + 4 H(+)(out). In terms of biological role, core subunit of the mitochondrial membrane respiratory chain NADH dehydrogenase (Complex I) that is believed to belong to the minimal assembly required for catalysis. Complex I functions in the transfer of electrons from NADH to the respiratory chain. The immediate electron acceptor for the enzyme is believed to be ubiquinone. The protein is NADH-ubiquinone oxidoreductase chain 6 (MT-ND6) of Carassius auratus (Goldfish).